Consider the following 187-residue polypeptide: Potassium-transporting ATPase KdpC subunit (187 aa).

Residues 11 to 31 (LILLMTVVTGALYPLAVTGIA) traverse the membrane as a helical segment.

This sequence belongs to the KdpC family. As to quaternary structure, the system is composed of three essential subunits: KdpA, KdpB and KdpC.

It localises to the cell inner membrane. Functionally, part of the high-affinity ATP-driven potassium transport (or Kdp) system, which catalyzes the hydrolysis of ATP coupled with the electrogenic transport of potassium into the cytoplasm. This subunit acts as a catalytic chaperone that increases the ATP-binding affinity of the ATP-hydrolyzing subunit KdpB by the formation of a transient KdpB/KdpC/ATP ternary complex. This Pseudomonas entomophila (strain L48) protein is Potassium-transporting ATPase KdpC subunit.